A 290-amino-acid polypeptide reads, in one-letter code: uncharacterized protein (290 aa).

Disordered regions lie at residues 1–98 and 209–236; these read MLGQ…SRRV and LSGQ…AATT. Over residues 63–76 the composition is skewed to basic and acidic residues; it reads KPDRVRPGQRDRIG. The segment covering 87-97 has biased composition (low complexity); the sequence is AGQARAASSRR. The chain crosses the membrane as a helical span at residues 261–281; sequence CILTALLAVSFHSIGVVIMTS.

It is found in the membrane. This is an uncharacterized protein from Homo sapiens (Human).